Here is a 1444-residue protein sequence, read N- to C-terminus: DNA polymerase III PolC-type (1444 aa).

Positions 196-218 are disordered; sequence EAVQVMQKRQAEGQNGNSSAAPL. Residues 207-216 are compositionally biased toward polar residues; that stretch reads EGQNGNSSAA. In terms of domain architecture, Exonuclease spans 428 to 584; it reads YCVFDVETTG…FDAEATAYLA (157 aa).

This sequence belongs to the DNA polymerase type-C family. PolC subfamily.

Its subcellular location is the cytoplasm. It catalyses the reaction DNA(n) + a 2'-deoxyribonucleoside 5'-triphosphate = DNA(n+1) + diphosphate. Required for replicative DNA synthesis. This DNA polymerase also exhibits 3' to 5' exonuclease activity. This is DNA polymerase III PolC-type from Listeria welshimeri serovar 6b (strain ATCC 35897 / DSM 20650 / CCUG 15529 / CIP 8149 / NCTC 11857 / SLCC 5334 / V8).